The primary structure comprises 255 residues: High-affinity branched-chain amino acid transport ATP-binding protein LivG (255 aa).

An ABC transporter domain is found at 6 to 254 (LAVNGLMMRF…PDVIRAYLGE (249 aa)). 38–45 (GPNGAGKT) contributes to the ATP binding site.

It belongs to the ABC transporter superfamily.

Component of the high-affinity branched-chain amino acid transport system. This Salmonella typhi protein is High-affinity branched-chain amino acid transport ATP-binding protein LivG (livG).